A 325-amino-acid chain; its full sequence is Geranylgeranyl transferase type-2 subunit beta (325 aa).

6 PFTB repeats span residues 9–50 (KEKH…CVLD), 57–99 (KEEV…ATYD), 109–150 (KVRL…SILG), 157–198 (VDPA…AIAN), 208–249 (LEEI…AIIG), and 256–298 (YEKL…SLMG). Geranylgeranyl diphosphate is bound by residues 183-185 (HAA) and 228-240 (RPSKLPDVCYSWW). Zn(2+) is bound by residues Asp-234, Cys-236, and His-286.

Belongs to the protein prenyltransferase subunit beta family. In terms of assembly, heterodimer of an alpha and a beta subunit. Zn(2+) serves as cofactor.

It carries out the reaction geranylgeranyl diphosphate + L-cysteinyl-[protein] = S-geranylgeranyl-L-cysteinyl-[protein] + diphosphate. Catalyzes the transfer of a geranyl-geranyl moiety from geranyl-geranyl pyrophosphate to proteins having the C-terminal -XCC or -XCXC, where both cysteines may become modified. Acts on YPT1 and SEC4. The protein is Geranylgeranyl transferase type-2 subunit beta (BET2) of Saccharomyces cerevisiae (strain ATCC 204508 / S288c) (Baker's yeast).